A 353-amino-acid polypeptide reads, in one-letter code: MPGNSIGKIFKVTTCGESHGPMLAGIIDGVPPGLSLNNKDIQYELNRRRPGFSKFTSQRREKDKVEIFSGIFKGITTGTSIGIRIKNIDIRSQDYSEIKNLYRPNHADYTYEKKYGIRDYRGGGRSSARETAIRVAAGAIAKKYLKLQHNIKIRGYLSQIGSIYCPFQSWEEVEKNPFFCSNSEKIKKIIHFIKKLKKSGNSVGAKITIIAKNVPIGLGEPVFDRLNAEIAHSIMSINAAKSIEIGDGIHVAKQTGVEHRDEILPNGFSSNHSGGILGGISNGEEIIVHAAFKPTSSIKIPGKTIDTFGKKRFIITKGRHDPCVGIRAVPIAEAMLAITLMDHVLRFKAQCGK.

Arginine 48 serves as a coordination point for NADP(+). FMN contacts are provided by residues 125-127, 238-239, glycine 278, 293-297, and arginine 319; these read RSS, NA, and KPTSS.

It belongs to the chorismate synthase family. Homotetramer. The cofactor is FMNH2.

It carries out the reaction 5-O-(1-carboxyvinyl)-3-phosphoshikimate = chorismate + phosphate. The protein operates within metabolic intermediate biosynthesis; chorismate biosynthesis; chorismate from D-erythrose 4-phosphate and phosphoenolpyruvate: step 7/7. Functionally, catalyzes the anti-1,4-elimination of the C-3 phosphate and the C-6 proR hydrogen from 5-enolpyruvylshikimate-3-phosphate (EPSP) to yield chorismate, which is the branch point compound that serves as the starting substrate for the three terminal pathways of aromatic amino acid biosynthesis. This reaction introduces a second double bond into the aromatic ring system. This is Chorismate synthase from Buchnera aphidicola subsp. Cinara cedri (strain Cc).